Here is a 507-residue protein sequence, read N- to C-terminus: Phosphoprotein (507 aa).

Positions 1-48 (MAEEQARHVKNGLECIRALKAEPIGSLAIEEAMAAWSEISDNPGQERA) are interaction with N0. Disordered regions lie at residues 41–99 (DNPG…PPRN), 134–163 (GLDG…TEGY), 201–231 (NNFP…IKKG), and 250–273 (GATQ…GNVP). Ser86 is modified (phosphoserine). Residues 134-145 (GLDGDSTLSGGD) show a composition bias toward low complexity. Positions 146–160 (NESENSDVDIGEPDT) are enriched in acidic residues. A Phosphoserine modification is found at Ser151. Residues 260–270 (SEPSGPGAPAG) are compositionally biased toward low complexity. The tract at residues 304 to 376 (GDYYDDELFS…LSSIMIAIPG (73 aa)) is multimerization. Interaction with the L polymerase stretches follow at residues 361–377 (STLE…IPGL) and 396–410 (PIIG…AEVL). The interval 457-507 (GPASRSVIRSIIKSSRLEEDRKRYLMTLLDDIKGANDLAKFHQMLMKIIMK) is x domain (XD). The interval 459–507 (ASRSVIRSIIKSSRLEEDRKRYLMTLLDDIKGANDLAKFHQMLMKIIMK) is interaction with the nucleocapsid (N-RNA).

Belongs to the morbillivirus P protein family. Homotetramer. Interacts (via multimerization domain and XD domain) with polymerase L; this interaction forms the polymerase L-P complex. Interacts (via N-terminus) with N0 (via Ncore); this interaction allows P to chaperon N0 to avoid N polymerization and non-specific RNA binding before encapsidation. Interacts (via C-terminus) with N-RNA template (via Ntail); this interaction maintains the P/L complex anchored to the nucleocapsid template during the sequential transcription. Interacts (via C-terminus) with protein C this interaction allows C to associate with the ribonucleocapsid. In terms of processing, phosphorylation on serines by host CK2 is necessary for the formation of viral factories.

Functionally, essential cofactor of the RNA polymerase L that plays a central role in the transcription and replication by forming the polymerase complex with RNA polymerase L and recruiting L to the genomic N-RNA template for RNA synthesis. Also plays a central role in the encapsidation of nascent RNA chains by forming the encapsidation complex with the nucleocapsid protein N (N-P complex). Acts as a chaperone for newly synthesized free N protein, so-called N0, allowing encapsidation of nascent RNA chains during replication. The nucleoprotein protein N prevents excessive phosphorylation of P, which leads to down-regulation of viral transcription/ replication. Participates, together with N, in the formation of viral factories (viroplasms), which are large inclusions in the host cytoplasm where replication takes place. This is Phosphoprotein (P/V) from Measles virus (strain Edmonston-AIK-C vaccine) (MeV).